Here is a 561-residue protein sequence, read N- to C-terminus: Asparagine synthetase [glutamine-hydrolyzing] (561 aa).

The For GATase activity role is filled by cysteine 2. Residues cysteine 2–lysine 191 enclose the Glutamine amidotransferase type-2 domain. L-glutamine is bound by residues arginine 49 to valine 53, asparagine 75 to glutamate 77, and aspartate 97. One can recognise an Asparagine synthetase domain in the interval histidine 213–tyrosine 536. ATP is bound by residues leucine 256, isoleucine 288, and serine 363–glycine 364. Lysine 385 carries the N6-acetyllysine modification. A Phosphothreonine modification is found at threonine 545. Serine 557 carries the phosphoserine modification.

It carries out the reaction L-aspartate + L-glutamine + ATP + H2O = L-asparagine + L-glutamate + AMP + diphosphate + H(+). Its pathway is amino-acid biosynthesis; L-asparagine biosynthesis; L-asparagine from L-aspartate (L-Gln route): step 1/1. This Pongo abelii (Sumatran orangutan) protein is Asparagine synthetase [glutamine-hydrolyzing] (ASNS).